Reading from the N-terminus, the 359-residue chain is Type-1 angiotensin II receptor B (359 aa).

Topologically, residues Met-1–Asn-25 are extracellular. Asn-4 carries N-linked (GlcNAc...) asparagine glycosylation. Residues Gln-15 and Asp-17 each contribute to the angiotensin II site. Disulfide bonds link Cys-18–Cys-274 and Cys-101–Cys-180. A helical transmembrane segment spans residues Tyr-26–Phe-55. The Cytoplasmic portion of the chain corresponds to Tyr-56 to Thr-61. A helical transmembrane segment spans residues Val-62 to Ala-89. The Extracellular segment spans residues Met-90–Asn-98. Residues His-99–Asp-125 traverse the membrane as a helical segment. Topologically, residues Arg-126–Thr-141 are cytoplasmic. Residues Met-142–Ile-165 traverse the membrane as a helical segment. The Extracellular portion of the chain corresponds to Tyr-166–Thr-190. Position 167 (Arg-167) interacts with angiotensin II. Asn-176 carries an N-linked (GlcNAc...) asparagine glycan. Residues Phe-182, His-183, and Tyr-184 each contribute to the angiotensin II site. N-linked (GlcNAc...) asparagine glycosylation is present at Asn-188. The chain crosses the membrane as a helical span at residues Leu-191 to Thr-216. Lys-199 is an angiotensin II binding site. Residues Leu-217–Phe-239 are Cytoplasmic-facing. The chain crosses the membrane as a helical span at residues Arg-240–Leu-268. Over Gly-269–Asp-278 the chain is Extracellular. Residues Ile-279–Phe-304 form a helical membrane-spanning segment. The Cytoplasmic segment spans residues Leu-305–Glu-359. Residues Tyr-339 to Glu-359 are disordered. The span at Ser-346 to Glu-359 shows a compositional bias: low complexity.

This sequence belongs to the G-protein coupled receptor 1 family. Interacts with MAS1. Interacts with ARRB1. Interacts with FLNA (via filamin repeat 21); increases PKA-mediated phosphorylation of FLNA. Post-translationally, C-terminal Ser or Thr residues may be phosphorylated. As to expression, is expressed in the liver, kidney, aorta, lung, uterus, ovary, spleen, heart, and vascular smooth muscle cell. Expressed most abundantly in the adrenal gland.

The protein resides in the cell membrane. Receptor for angiotensin II, a vasoconstricting peptide, which acts as a key regulator of blood pressure and sodium retention by the kidney. The activated receptor in turn couples to G-alpha proteins G(q) (GNAQ, GNA11, GNA14 or GNA15) and thus activates phospholipase C and increases the cytosolic Ca(2+) concentrations, which in turn triggers cellular responses such as stimulation of protein kinase C. The chain is Type-1 angiotensin II receptor B (Agtr1b) from Rattus norvegicus (Rat).